Consider the following 295-residue polypeptide: Bifunctional protein FolD (295 aa).

NADP(+) contacts are provided by residues 165 to 167 (GRG), serine 192, and isoleucine 233.

Belongs to the tetrahydrofolate dehydrogenase/cyclohydrolase family. In terms of assembly, homodimer.

It catalyses the reaction (6R)-5,10-methylene-5,6,7,8-tetrahydrofolate + NADP(+) = (6R)-5,10-methenyltetrahydrofolate + NADPH. It carries out the reaction (6R)-5,10-methenyltetrahydrofolate + H2O = (6R)-10-formyltetrahydrofolate + H(+). It participates in one-carbon metabolism; tetrahydrofolate interconversion. Its function is as follows. Catalyzes the oxidation of 5,10-methylenetetrahydrofolate to 5,10-methenyltetrahydrofolate and then the hydrolysis of 5,10-methenyltetrahydrofolate to 10-formyltetrahydrofolate. The protein is Bifunctional protein FolD of Tropheryma whipplei (strain Twist) (Whipple's bacillus).